Here is a 199-residue protein sequence, read N- to C-terminus: Lipid A acyltransferase PagP (199 aa).

Residues methionine 1 to alanine 25 form the signal peptide. Catalysis depends on residues histidine 74, aspartate 117, and serine 118.

Belongs to the lipid A palmitoyltransferase family. In terms of assembly, homodimer.

It localises to the cell outer membrane. It carries out the reaction a lipid A + a 1,2-diacyl-sn-glycero-3-phosphocholine = a hepta-acyl lipid A + a 2-acyl-sn-glycero-3-phosphocholine. It catalyses the reaction a lipid IVA + a 1,2-diacyl-sn-glycero-3-phosphocholine = a lipid IVB + a 2-acyl-sn-glycero-3-phosphocholine. The enzyme catalyses a lipid IIA + a 1,2-diacyl-sn-glycero-3-phosphocholine = a lipid IIB + a 2-acyl-sn-glycero-3-phosphocholine. Functionally, transfers a fatty acid residue from the sn-1 position of a phospholipid to the N-linked hydroxyfatty acid chain on the proximal unit of lipid A or its precursors. This chain is Lipid A acyltransferase PagP, found in Yersinia pestis bv. Antiqua (strain Antiqua).